Reading from the N-terminus, the 288-residue chain is Bifunctional protein FolD (288 aa).

Residues 166-168, serine 191, and isoleucine 232 each bind NADP(+); that span reads GRS.

It belongs to the tetrahydrofolate dehydrogenase/cyclohydrolase family. In terms of assembly, homodimer.

The enzyme catalyses (6R)-5,10-methylene-5,6,7,8-tetrahydrofolate + NADP(+) = (6R)-5,10-methenyltetrahydrofolate + NADPH. It catalyses the reaction (6R)-5,10-methenyltetrahydrofolate + H2O = (6R)-10-formyltetrahydrofolate + H(+). It functions in the pathway one-carbon metabolism; tetrahydrofolate interconversion. Catalyzes the oxidation of 5,10-methylenetetrahydrofolate to 5,10-methenyltetrahydrofolate and then the hydrolysis of 5,10-methenyltetrahydrofolate to 10-formyltetrahydrofolate. The chain is Bifunctional protein FolD from Rickettsia rickettsii (strain Iowa).